Here is a 339-residue protein sequence, read N- to C-terminus: DNA-directed RNA polymerase RPB7 homolog (339 aa).

This sequence belongs to the Asfivirus DNA-directed RNA polymerase RPB7 homolog family. As to quaternary structure, part of the viral DNA-directed RNA polymerase that consists of 8 polII-like subunits (RPB1, RPB2, RPB3, RPB5, RPB6, RPB7, RPB9, RPB10), a capping enzyme and a termination factor.

It localises to the host cytoplasm. The protein localises to the virion. In terms of biological role, component of the DNA-directed RNA polymerase (RNAP) that catalyzes the transcription in the cytoplasm of viral DNA into RNA using the four ribonucleoside triphosphates as substrates. The sequence is that of DNA-directed RNA polymerase RPB7 homolog from African swine fever virus (strain Badajoz 1971 Vero-adapted) (Ba71V).